Consider the following 243-residue polypeptide: Auxin-induced protein AUX28 (243 aa).

The EAR-like (transcriptional repression) motif lies at 8 to 12; the sequence is LRLGL. A disordered region spans residues 54 to 91; sequence AATTAAAAADPTDKHKTLPKEKTLLPADPAKPPAKTQV. The span at 64–76 shows a compositional bias: basic and acidic residues; it reads PTDKHKTLPKEKT. The segment covering 77 to 89 has biased composition (low complexity); that stretch reads LLPADPAKPPAKT. The PB1 domain maps to 123–223; that stretch reads ASFVKVSMDG…SCKRLRIMKG (101 aa).

The protein belongs to the Aux/IAA family. Homodimers and heterodimers.

Its subcellular location is the nucleus. Functionally, aux/IAA proteins are short-lived transcriptional factors that function as repressors of early auxin response genes at low auxin concentrations. Repression is thought to result from the interaction with auxin response factors (ARFs), proteins that bind to the auxin-responsive promoter element (AuxRE). Formation of heterodimers with ARF proteins may alter their ability to modulate early auxin response genes expression. This chain is Auxin-induced protein AUX28 (AUX28), found in Glycine max (Soybean).